Here is a 599-residue protein sequence, read N- to C-terminus: MAAAPWLYLSRRRSSTQTSLRRFLICSSSFDADEFISSQSRVIGGRGEEEVRFSGALFSRMIHSSTYHPYRQIPLPHSSVQLLDASLGCRGFSSGSSNVSDGCDEEVESECDNDEETGVSCVESSTNPEEVERVCKVIDELFALDRNMEAVLDEMKLDLSHDLIVEVLERFRHARKPAFRFFCWAAERQGFAHASRTYNSMMSILAKTRQFETMVSVLEEMGTKGLLTMETFTIAMKAFAAAKERKKAVGIFELMKKYKFKIGVETINCLLDSLGRAKLGKEAQVLFDKLKERFTPNMMTYTVLLNGWCRVRNLIEAARIWNDMIDHGLKPDIVAHNVMLEGLLRSMKKSDAIKLFHVMKSKGPCPNVRSYTIMIRDFCKQSSMETAIEYFDDMVDSGLQPDAAVYTCLITGFGTQKKLDTVYELLKEMQEKGHPPDGKTYNALIKLMANQKMPEHGTRIYNKMIQNEIEPSIHTFNMIMKSYFVARNYEMGRAVWDEMIKKGICPDDNSYTVLIRGLISEGKSREACRYLEEMLDKGMKTPLIDYNKFAADFHRGGQPEIFEELAQRAKFSGKFAAAEIFARWAQMTRRRCKQRFMED.

The transit peptide at Met-1 to Val-99 directs the protein to the mitochondrion. PPR repeat units follow at residues Ala-194–Thr-228, Glu-230–Ile-262, Gly-263–Arg-293, Asn-297–Pro-331, Asp-332–Pro-366, Asn-367–Pro-401, Asp-402–Pro-436, Asp-437–Pro-471, Ser-472–Pro-506, and Asp-507–Thr-541.

The protein belongs to the PPR family. P subfamily.

It is found in the mitochondrion. This chain is Pentatricopeptide repeat-containing protein At3g62540, mitochondrial, found in Arabidopsis thaliana (Mouse-ear cress).